A 120-amino-acid polypeptide reads, in one-letter code: Large ribosomal subunit protein uL22 (120 aa).

Belongs to the universal ribosomal protein uL22 family. Part of the 50S ribosomal subunit.

This protein binds specifically to 23S rRNA; its binding is stimulated by other ribosomal proteins, e.g. L4, L17, and L20. It is important during the early stages of 50S assembly. It makes multiple contacts with different domains of the 23S rRNA in the assembled 50S subunit and ribosome. Functionally, the globular domain of the protein is located near the polypeptide exit tunnel on the outside of the subunit, while an extended beta-hairpin is found that lines the wall of the exit tunnel in the center of the 70S ribosome. This chain is Large ribosomal subunit protein uL22, found in Corynebacterium diphtheriae (strain ATCC 700971 / NCTC 13129 / Biotype gravis).